The following is a 200-amino-acid chain: 3-isopropylmalate dehydratase small subunit (200 aa).

Belongs to the LeuD family. LeuD type 1 subfamily. As to quaternary structure, heterodimer of LeuC and LeuD.

The catalysed reaction is (2R,3S)-3-isopropylmalate = (2S)-2-isopropylmalate. It participates in amino-acid biosynthesis; L-leucine biosynthesis; L-leucine from 3-methyl-2-oxobutanoate: step 2/4. Its function is as follows. Catalyzes the isomerization between 2-isopropylmalate and 3-isopropylmalate, via the formation of 2-isopropylmaleate. The sequence is that of 3-isopropylmalate dehydratase small subunit from Pectobacterium carotovorum subsp. carotovorum (strain PC1).